The chain runs to 508 residues: Photosystem II CP47 reaction center protein (508 aa).

Helical transmembrane passes span 21–36 (AVHIMHTALVSGWAGS), 101–115 (IVFSGLCFLAAIWHW), 140–156 (GIHLFLAGVACFGFGAF), 203–218 (IAAGTLGILAGLFHLS), 237–252 (VLSSSIAAVFFAAFVV), and 457–472 (TFALLFFFGHIWHGAR).

The protein belongs to the PsbB/PsbC family. PsbB subfamily. As to quaternary structure, PSII is composed of 1 copy each of membrane proteins PsbA, PsbB, PsbC, PsbD, PsbE, PsbF, PsbH, PsbI, PsbJ, PsbK, PsbL, PsbM, PsbT, PsbX, PsbY, PsbZ, Psb30/Ycf12, at least 3 peripheral proteins of the oxygen-evolving complex and a large number of cofactors. It forms dimeric complexes. Requires Binds multiple chlorophylls. PSII binds additional chlorophylls, carotenoids and specific lipids. as cofactor.

Its subcellular location is the plastid. The protein resides in the chloroplast thylakoid membrane. Functionally, one of the components of the core complex of photosystem II (PSII). It binds chlorophyll and helps catalyze the primary light-induced photochemical processes of PSII. PSII is a light-driven water:plastoquinone oxidoreductase, using light energy to abstract electrons from H(2)O, generating O(2) and a proton gradient subsequently used for ATP formation. This chain is Photosystem II CP47 reaction center protein, found in Triticum aestivum (Wheat).